A 156-amino-acid chain; its full sequence is Sec-independent protein translocase protein TatB (156 aa).

Residues 2–22 traverse the membrane as a helical segment; it reads FSSVGWGEIFLLVVVGLVVIG. The interval 100–156 is disordered; it reads KIMAEGTEGEAQRNKQAADNNANVVERPADGSTARPTQNDPKDGPNYSGGVSWTDII. A compositionally biased stretch (polar residues) spans 113 to 122; that stretch reads NKQAADNNAN.

Belongs to the TatB family. As to quaternary structure, the Tat system comprises two distinct complexes: a TatABC complex, containing multiple copies of TatA, TatB and TatC subunits, and a separate TatA complex, containing only TatA subunits. Substrates initially bind to the TatABC complex, which probably triggers association of the separate TatA complex to form the active translocon.

The protein resides in the cell membrane. Functionally, part of the twin-arginine translocation (Tat) system that transports large folded proteins containing a characteristic twin-arginine motif in their signal peptide across membranes. Together with TatC, TatB is part of a receptor directly interacting with Tat signal peptides. TatB may form an oligomeric binding site that transiently accommodates folded Tat precursor proteins before their translocation. In Corynebacterium glutamicum (strain ATCC 13032 / DSM 20300 / JCM 1318 / BCRC 11384 / CCUG 27702 / LMG 3730 / NBRC 12168 / NCIMB 10025 / NRRL B-2784 / 534), this protein is Sec-independent protein translocase protein TatB.